The chain runs to 471 residues: Ribulose bisphosphate carboxylase large chain (471 aa).

Substrate is bound by residues asparagine 119 and threonine 169. Catalysis depends on lysine 171, which acts as the Proton acceptor. Lysine 173 provides a ligand contact to substrate. Residues lysine 197, aspartate 199, and glutamate 200 each contribute to the Mg(2+) site. Lysine 197 is modified (N6-carboxylysine). Histidine 290 acts as the Proton acceptor in catalysis. 3 residues coordinate substrate: arginine 291, histidine 323, and serine 375.

Belongs to the RuBisCO large chain family. Type I subfamily. As to quaternary structure, heterohexadecamer of 8 large chains and 8 small chains; disulfide-linked. The disulfide link is formed within the large subunit homodimers. Requires Mg(2+) as cofactor. The disulfide bond which can form in the large chain dimeric partners within the hexadecamer appears to be associated with oxidative stress and protein turnover.

The protein resides in the carboxysome. It carries out the reaction 2 (2R)-3-phosphoglycerate + 2 H(+) = D-ribulose 1,5-bisphosphate + CO2 + H2O. The catalysed reaction is D-ribulose 1,5-bisphosphate + O2 = 2-phosphoglycolate + (2R)-3-phosphoglycerate + 2 H(+). In terms of biological role, ruBisCO catalyzes two reactions: the carboxylation of D-ribulose 1,5-bisphosphate, the primary event in carbon dioxide fixation, as well as the oxidative fragmentation of the pentose substrate in the photorespiration process. Both reactions occur simultaneously and in competition at the same active site. The sequence is that of Ribulose bisphosphate carboxylase large chain from Crocosphaera subtropica (strain ATCC 51142 / BH68) (Cyanothece sp. (strain ATCC 51142)).